The sequence spans 785 residues: Disintegrin and metalloproteinase domain-containing protein B (785 aa).

The N-terminal stretch at 1-26 (MRFLKSALPFVASALSLLSVQAAARS) is a signal peptide. At 27 to 703 (QEPSAIQHVS…GSWVEQHKNL (677 aa)) the chain is on the extracellular side. The region spanning 279 to 507 (KQVALVGIAA…NSVKSSCLSD (229 aa)) is the Peptidase M12B domain. N-linked (GlcNAc...) asparagine glycosylation is found at Asn322, Asn329, and Asn355. 2 cysteine pairs are disulfide-bonded: Cys398–Cys492 and Cys446–Cys464. His429 contacts Zn(2+). The active site involves Glu430. Zn(2+)-binding residues include His433 and His439. A Disintegrin domain is found at 516 to 605 (GSQCGNGIVE…TCPADSFKKD (90 aa)). N-linked (GlcNAc...) asparagine glycosylation is found at Asn561, Asn593, and Asn640. A disulfide bridge connects residues Cys577 and Cys597. The chain crosses the membrane as a helical span at residues 704–724 (VIGVACGVGGLLVLSILWCMI). Residues 725 to 785 (NRCRRARTVV…GPYQSATRYA (61 aa)) lie on the Cytoplasmic side of the membrane. The tract at residues 737 to 785 (PPMRPWPGPMPPPPPQMGQWAGPNRGYQGLRAEPPPPYPGPYQSATRYA) is disordered. Pro residues predominate over residues 739–752 (MRPWPGPMPPPPPQ).

Zn(2+) serves as cofactor.

The protein resides in the membrane. Its function is as follows. Probable zinc protease. This chain is Disintegrin and metalloproteinase domain-containing protein B (ADM-B), found in Aspergillus fumigatus (strain ATCC MYA-4609 / CBS 101355 / FGSC A1100 / Af293) (Neosartorya fumigata).